A 514-amino-acid chain; its full sequence is 2,3-bisphosphoglycerate-independent phosphoglycerate mutase (514 aa).

Residues aspartate 14 and serine 64 each contribute to the Mn(2+) site. Serine 64 serves as the catalytic Phosphoserine intermediate. Residues histidine 125, 155–156 (RD), arginine 187, arginine 193, 263–266 (RADR), and lysine 336 contribute to the substrate site. Residues aspartate 403, histidine 407, aspartate 444, histidine 445, and histidine 463 each contribute to the Mn(2+) site.

Belongs to the BPG-independent phosphoglycerate mutase family. In terms of assembly, monomer. Requires Mn(2+) as cofactor.

The catalysed reaction is (2R)-2-phosphoglycerate = (2R)-3-phosphoglycerate. Its pathway is carbohydrate degradation; glycolysis; pyruvate from D-glyceraldehyde 3-phosphate: step 3/5. Its function is as follows. Catalyzes the interconversion of 2-phosphoglycerate and 3-phosphoglycerate. The protein is 2,3-bisphosphoglycerate-independent phosphoglycerate mutase of Shewanella sp. (strain ANA-3).